Consider the following 147-residue polypeptide: MNNILVINGPNLNLLGKREPDMYGNITLENINQKIKLHFKNEDLKIDFFQSNEEGKIIDKIIESQKKYNAIVINPAAYSHYSIAILDAMRSINIPAVEVHLSNIYKREEYRKKSVTAEASLGVISGFGYYGYIMAIEFILNNLVREK.

Catalysis depends on Tyr23, which acts as the Proton acceptor. Substrate is bound by residues Asn74, His80, and Asp87. Catalysis depends on His100, which acts as the Proton donor. Substrate contacts are provided by residues 101–102 and Arg111; that span reads LS.

It belongs to the type-II 3-dehydroquinase family. As to quaternary structure, homododecamer.

It catalyses the reaction 3-dehydroquinate = 3-dehydroshikimate + H2O. The protein operates within metabolic intermediate biosynthesis; chorismate biosynthesis; chorismate from D-erythrose 4-phosphate and phosphoenolpyruvate: step 3/7. Catalyzes a trans-dehydration via an enolate intermediate. The protein is 3-dehydroquinate dehydratase of Clostridium botulinum (strain 657 / Type Ba4).